The sequence spans 164 residues: Succinate dehydrogenase assembly factor 2, mitochondrial (164 aa).

This sequence belongs to the SDHAF2 family. In terms of assembly, interacts with the flavoprotein subunit within the SDH catalytic dimer.

The protein localises to the mitochondrion matrix. Functionally, plays an essential role in the assembly of succinate dehydrogenase (SDH), an enzyme complex (also referred to as respiratory complex II) that is a component of both the tricarboxylic acid (TCA) cycle and the mitochondrial electron transport chain, and which couples the oxidation of succinate to fumarate with the reduction of ubiquinone (coenzyme Q) to ubiquinol. Required for flavinylation (covalent attachment of FAD) of the flavoprotein subunit of the SDH catalytic dimer. This is Succinate dehydrogenase assembly factor 2, mitochondrial from Lodderomyces elongisporus (strain ATCC 11503 / CBS 2605 / JCM 1781 / NBRC 1676 / NRRL YB-4239) (Yeast).